The following is a 234-amino-acid chain: R-spondin-4 (234 aa).

The signal sequence occupies residues 1–19; sequence MRAPLCLLLLVAHAVDMLA. N-linked (GlcNAc...) asparagine glycosylation is present at asparagine 34. 11 cysteine pairs are disulfide-bonded: cysteine 35/cysteine 41, cysteine 38/cysteine 47, cysteine 50/cysteine 69, cysteine 73/cysteine 88, cysteine 91/cysteine 98, cysteine 95/cysteine 104, cysteine 107/cysteine 118, cysteine 122/cysteine 135, cysteine 139/cysteine 181, cysteine 150/cysteine 157, and cysteine 190/cysteine 196. One copy of the FU repeat lies at 85-128; it reads VNRCKKCGATCESCFSQDFCIRCKRQFYLYKGKCLPTCPPGTLA. In terms of domain architecture, TSP type-1 spans 138–197; it reads ECELGPWGGWSPCTHNGKTCGSAWGLESRVREAGRAGHEEAATCQVLSESRKCPIQRPCP. Positions 190 to 234 are disordered; that stretch reads CPIQRPCPGERSPGQKKGRKDRRPRKDRKLDRRLDVRPRQPGLQP. Over residues 203–216 the composition is skewed to basic residues; that stretch reads GQKKGRKDRRPRKD. Positions 217-227 are enriched in basic and acidic residues; sequence RKLDRRLDVRP.

Belongs to the R-spondin family. In terms of assembly, binds heparin. Interacts with LGR4, LGR5 and LGR6. Tyr-112 may be phosphorylated; however as this position is probably extracellular, the vivo relevance is not proven.

The protein resides in the secreted. Functionally, activator of the canonical Wnt signaling pathway by acting as a ligand for LGR4-6 receptors. Upon binding to LGR4-6 (LGR4, LGR5 or LGR6), LGR4-6 associate with phosphorylated LRP6 and frizzled receptors that are activated by extracellular Wnt receptors, triggering the canonical Wnt signaling pathway to increase expression of target genes. Also regulates the canonical Wnt/beta-catenin-dependent pathway and non-canonical Wnt signaling by acting as an inhibitor of ZNRF3, an important regulator of the Wnt signaling pathway. This is R-spondin-4 (RSPO4) from Homo sapiens (Human).